A 216-amino-acid polypeptide reads, in one-letter code: 3-isopropylmalate dehydratase small subunit (216 aa).

It belongs to the LeuD family. LeuD type 1 subfamily. Heterodimer of LeuC and LeuD.

It carries out the reaction (2R,3S)-3-isopropylmalate = (2S)-2-isopropylmalate. The protein operates within amino-acid biosynthesis; L-leucine biosynthesis; L-leucine from 3-methyl-2-oxobutanoate: step 2/4. Its function is as follows. Catalyzes the isomerization between 2-isopropylmalate and 3-isopropylmalate, via the formation of 2-isopropylmaleate. The chain is 3-isopropylmalate dehydratase small subunit from Polaromonas naphthalenivorans (strain CJ2).